We begin with the raw amino-acid sequence, 447 residues long: C4-dicarboxylate transport protein (447 aa).

The next 8 helical transmembrane spans lie at 22-42 (FQVIVAIVLGAILGHYEPLVG), 52-72 (FINLVKMIIAPVIFLTIVTGI), 90-110 (AYFLFFSTLALIVGMIVAHVV), 159-179 (GNILQVLFIAVLFGIALASVG), 199-219 (LVHILMKAAPIGAFGAIAFTI), 232-252 (WLVGSFYLTAFLFVAVILGVV), 325-347 (LFIAQATNTELTLGHQIALLLVA), and 366-386 (AATLAVVPEVPVAGMALILGV).

This sequence belongs to the dicarboxylate/amino acid:cation symporter (DAACS) (TC 2.A.23) family.

Its subcellular location is the cell inner membrane. Responsible for the transport of dicarboxylates such as succinate, fumarate, and malate from the periplasm across the membrane. The chain is C4-dicarboxylate transport protein from Stenotrophomonas maltophilia (strain R551-3).